Consider the following 353-residue polypeptide: Fe(3+) ions import ATP-binding protein FbpC (353 aa).

The 231-residue stretch at 9–239 (VTFENVTKKF…PASAFIADFM (231 aa)) folds into the ABC transporter domain. 41–48 (GLSGCGKT) contributes to the ATP binding site.

This sequence belongs to the ABC transporter superfamily. Fe(3+) ion importer (TC 3.A.1.10) family. In terms of assembly, the complex is composed of two ATP-binding proteins (FbpC), two transmembrane proteins (FbpB) and a solute-binding protein (FbpA).

The protein resides in the cell inner membrane. The enzyme catalyses Fe(3+)(out) + ATP + H2O = Fe(3+)(in) + ADP + phosphate + H(+). Part of the ABC transporter complex FbpABC involved in Fe(3+) ions import. Responsible for energy coupling to the transport system. This is Fe(3+) ions import ATP-binding protein FbpC from Brucella melitensis biotype 1 (strain ATCC 23456 / CCUG 17765 / NCTC 10094 / 16M).